Reading from the N-terminus, the 392-residue chain is Trans-2-enoyl-CoA reductase [NADH] (392 aa).

NAD(+) is bound by residues 74–75, 111–112, and 141–142; these read FE, DA, and LA. Residue tyrosine 227 coordinates substrate. Tyrosine 237 serves as the catalytic Proton donor. NAD(+) contacts are provided by residues lysine 246 and 276–278; that span reads VVT.

This sequence belongs to the TER reductase family. In terms of assembly, monomer.

It carries out the reaction a 2,3-saturated acyl-CoA + NAD(+) = a (2E)-enoyl-CoA + NADH + H(+). The protein operates within lipid metabolism; fatty acid biosynthesis. Its function is as follows. Involved in the fatty acid synthesis (FAS II). Catalyzes the reduction of a carbon-carbon double bond in an enoyl moiety that is covalently linked to a coenzyme A (CoA). This chain is Trans-2-enoyl-CoA reductase [NADH], found in Brachyspira hyodysenteriae (strain ATCC 49526 / WA1).